Here is a 112-residue protein sequence, read N- to C-terminus: uncharacterized protein (112 aa).

Helical transmembrane passes span 44–63 (VITG…LHSL) and 68–90 (LAAL…KLVH).

The protein resides in the cell membrane. This is an uncharacterized protein from Archaeoglobus fulgidus (strain ATCC 49558 / DSM 4304 / JCM 9628 / NBRC 100126 / VC-16).